The following is a 293-amino-acid chain: Aminodeoxychorismate lyase (293 aa).

The residue at position 146 (Lys146) is an N6-(pyridoxal phosphate)lysine.

The protein belongs to the class-IV pyridoxal-phosphate-dependent aminotransferase family. As to quaternary structure, homodimer. Pyridoxal 5'-phosphate serves as cofactor.

It carries out the reaction 4-amino-4-deoxychorismate = 4-aminobenzoate + pyruvate + H(+). The protein operates within cofactor biosynthesis; tetrahydrofolate biosynthesis; 4-aminobenzoate from chorismate: step 2/2. Involved in the biosynthesis of p-aminobenzoate (PABA), a precursor of tetrahydrofolate. Converts 4-amino-4-deoxychorismate into 4-aminobenzoate (PABA) and pyruvate. This is Aminodeoxychorismate lyase from Bacillus subtilis (strain 168).